We begin with the raw amino-acid sequence, 266 residues long: Small ribosomal subunit protein uS2 (266 aa).

This sequence belongs to the universal ribosomal protein uS2 family.

This chain is Small ribosomal subunit protein uS2, found in Paramagnetospirillum magneticum (strain ATCC 700264 / AMB-1) (Magnetospirillum magneticum).